A 109-amino-acid chain; its full sequence is ATP-dependent Clp protease adapter protein ClpS (109 aa).

The tract at residues M1 to T25 is disordered.

This sequence belongs to the ClpS family. In terms of assembly, binds to the N-terminal domain of the chaperone ClpA.

Its function is as follows. Involved in the modulation of the specificity of the ClpAP-mediated ATP-dependent protein degradation. The chain is ATP-dependent Clp protease adapter protein ClpS from Phenylobacterium zucineum (strain HLK1).